Reading from the N-terminus, the 340-residue chain is Phenylalanine--tRNA ligase alpha subunit (340 aa).

Residue glutamate 255 coordinates Mg(2+).

The protein belongs to the class-II aminoacyl-tRNA synthetase family. Phe-tRNA synthetase alpha subunit type 1 subfamily. As to quaternary structure, tetramer of two alpha and two beta subunits. It depends on Mg(2+) as a cofactor.

The protein localises to the cytoplasm. It catalyses the reaction tRNA(Phe) + L-phenylalanine + ATP = L-phenylalanyl-tRNA(Phe) + AMP + diphosphate + H(+). The chain is Phenylalanine--tRNA ligase alpha subunit from Desulfitobacterium hafniense (strain Y51).